We begin with the raw amino-acid sequence, 675 residues long: MQESGGSSGQGGPSLCLEWKQLNYYVPDQEQSNYSFWNECRKKRELRILQDASGHMKTGDLIAILGGSGAGKTTLLAAISQRLRGNLTGDVVLNGMAMERHQMTRISSFLPQFEINVKTFTAYEHLYFMSHFKMHRRTTKAEKRQRVADLLLAVGLRDAAHTRIQQLSGGERKRLSLAEELITDPIFLFCDEPTTGLDSFSAYSVIKTLRHLCTRRRIAKHSLNQVYGEDSFETPSGESSASGSGSKSIEMEVVAESHESLLQTMRELPALGVLSNSPNGTHKKAAICSIHQPTSDIFELFTHIILMDGGRIVYQGRTEQAAKFFTDLGYELPLNCNPADFYLKTLADKEGKENAGAVLRAKYEHETDGLYSGSWLLARSYSGDYLKHVQNFKKIRWIYQVYLLMVRFMTEDLRNIRSGLIAFGFFMITAVTLSLMYSGIGGLTQRTVQDVGGSIFMLSNEMIFTFSYGVTYIFPAALPIIRREVGEGTYSLSAYYVALVLSFVPVAFFKGYVFLSVIYASIYYTRGFLLYLSMGFLMSLSAVAAVGYGVFLSSLFESDKMASECAAPFDLIFLIFGGTYMNVDTVPGLKYLSLFFYSNEALMYKFWIDIDNIDCPVNEDHPCIKTGVEVLQQGSYRNADYTYWLDCFSLVVVAVIFHIVSFGLVRRYIHRSGYY.

The Cytoplasmic portion of the chain corresponds to 1–419 (MQESGGSSGQ…TEDLRNIRSG (419 aa)). The region spanning 34–261 (YSFWNECRKK…EVVAESHESL (228 aa)) is the ABC transporter domain. 66–73 (GGSGAGKT) serves as a coordination point for ATP. Residues 229 to 249 (EDSFETPSGESSASGSGSKSI) form a disordered region. Over residues 236–248 (SGESSASGSGSKS) the composition is skewed to low complexity. A helical membrane pass occupies residues 420–440 (LIAFGFFMITAVTLSLMYSGI). Residues 441–460 (GGLTQRTVQDVGGSIFMLSN) lie on the Extracellular side of the membrane. A helical membrane pass occupies residues 461-481 (EMIFTFSYGVTYIFPAALPII). The Cytoplasmic portion of the chain corresponds to 482 to 497 (RREVGEGTYSLSAYYV). The chain crosses the membrane as a helical span at residues 498-518 (ALVLSFVPVAFFKGYVFLSVI). Residues 519–531 (YASIYYTRGFLLY) are Extracellular-facing. Residues 532-552 (LSMGFLMSLSAVAAVGYGVFL) traverse the membrane as a helical segment. At 553–568 (SSLFESDKMASECAAP) the chain is on the cytoplasmic side. Residues 569–589 (FDLIFLIFGGTYMNVDTVPGL) traverse the membrane as a helical segment. The Extracellular segment spans residues 590–644 (KYLSLFFYSNEALMYKFWIDIDNIDCPVNEDHPCIKTGVEVLQQGSYRNADYTYW). A helical membrane pass occupies residues 645–665 (LDCFSLVVVAVIFHIVSFGLV). Over 666 to 675 (RRYIHRSGYY) the chain is Cytoplasmic.

This sequence belongs to the ABC transporter superfamily. ABCG family. Eye pigment precursor importer (TC 3.A.1.204) subfamily. May form a heterodimer with w/white.

It is found in the membrane. It carries out the reaction guanine(out) + ATP + H2O = guanine(in) + ADP + phosphate + H(+). It catalyses the reaction riboflavin(in) + ATP + H2O = riboflavin(out) + ADP + phosphate + H(+). The catalysed reaction is (6S)-5,6,7,8-tetrahydrofolate(out) + ATP + H2O = (6S)-5,6,7,8-tetrahydrofolate(in) + ADP + phosphate + H(+). ATP-dependent transporter of the ATP-binding cassette (ABC) family which transports various molecules including bioamines, neurotransmitters and metabolic intermediates. In the eye and probably in association with w/white, required for the transport of the eye red pigment precursor, guanine, into pigment cell granules. In Malpighian tubules, involved in guanine uptake. Probably in association with w/white, involved in aging-induced intestinal stem cell proliferation in the midgut by regulating tetrahydrofolate transport. This chain is Protein brown, found in Drosophila melanogaster (Fruit fly).